The sequence spans 413 residues: Floricaula/leafy homolog 1 (413 aa).

Disordered stretches follow at residues 154–177 (EGLS…GGTT) and 191–239 (QRRR…RQRE). The segment covering 201-210 (GRERRGRASA) has biased composition (basic and acidic residues). Over residues 211–225 (EEDEETEEGQEDEWN) the composition is skewed to acidic residues. 3 DNA-binding regions span residues 238-242 (REHPF), 307-314 (NKPKMRHY), and 378-381 (YVPT).

It belongs to the FLO/LFY family. Expressed in floral meristems and in indeterminate vegetative meristems.

The protein localises to the nucleus. In terms of biological role, probable transcription factor that act to specify determinacy in the progenitor cells for both flowers and leaves. This is Floricaula/leafy homolog 1 (FL1) from Nicotiana tabacum (Common tobacco).